The chain runs to 366 residues: Phospho-N-acetylmuramoyl-pentapeptide-transferase (366 aa).

A run of 10 helical transmembrane segments spans residues 27 to 47, 71 to 91, 93 to 113, 134 to 154, 174 to 194, 205 to 225, 245 to 265, 268 to 288, 297 to 317, and 343 to 363; these read AALF…ISSL, TPTM…LLWA, LSSI…AIGF, LGIE…AAQS, LMLN…VGAG, GLAI…AYLA, LAVI…FNAP, AIFM…TVAV, VIIG…VFWF, and QVVI…LSTL.

It belongs to the glycosyltransferase 4 family. MraY subfamily. Mg(2+) serves as cofactor.

It localises to the cell inner membrane. The catalysed reaction is UDP-N-acetyl-alpha-D-muramoyl-L-alanyl-gamma-D-glutamyl-meso-2,6-diaminopimeloyl-D-alanyl-D-alanine + di-trans,octa-cis-undecaprenyl phosphate = di-trans,octa-cis-undecaprenyl diphospho-N-acetyl-alpha-D-muramoyl-L-alanyl-D-glutamyl-meso-2,6-diaminopimeloyl-D-alanyl-D-alanine + UMP. The protein operates within cell wall biogenesis; peptidoglycan biosynthesis. Catalyzes the initial step of the lipid cycle reactions in the biosynthesis of the cell wall peptidoglycan: transfers peptidoglycan precursor phospho-MurNAc-pentapeptide from UDP-MurNAc-pentapeptide onto the lipid carrier undecaprenyl phosphate, yielding undecaprenyl-pyrophosphoryl-MurNAc-pentapeptide, known as lipid I. The chain is Phospho-N-acetylmuramoyl-pentapeptide-transferase from Sinorhizobium fredii (strain NBRC 101917 / NGR234).